We begin with the raw amino-acid sequence, 104 residues long: Ribonuclease P protein component 4 (104 aa).

Residues Cys-57, Cys-60, Cys-83, and Cys-86 each coordinate Zn(2+).

It belongs to the eukaryotic/archaeal RNase P protein component 4 family. In terms of assembly, consists of a catalytic RNA component and at least 4-5 protein subunits. Zn(2+) serves as cofactor.

It localises to the cytoplasm. It catalyses the reaction Endonucleolytic cleavage of RNA, removing 5'-extranucleotides from tRNA precursor.. Part of ribonuclease P, a protein complex that generates mature tRNA molecules by cleaving their 5'-ends. The chain is Ribonuclease P protein component 4 from Saccharolobus islandicus (strain M.14.25 / Kamchatka #1) (Sulfolobus islandicus).